The primary structure comprises 336 residues: Phosphate acyltransferase (336 aa).

This sequence belongs to the PlsX family. As to quaternary structure, homodimer. Probably interacts with PlsY.

The protein localises to the cytoplasm. The enzyme catalyses a fatty acyl-[ACP] + phosphate = an acyl phosphate + holo-[ACP]. It participates in lipid metabolism; phospholipid metabolism. Catalyzes the reversible formation of acyl-phosphate (acyl-PO(4)) from acyl-[acyl-carrier-protein] (acyl-ACP). This enzyme utilizes acyl-ACP as fatty acyl donor, but not acyl-CoA. The chain is Phosphate acyltransferase from Dictyoglomus thermophilum (strain ATCC 35947 / DSM 3960 / H-6-12).